A 131-amino-acid polypeptide reads, in one-letter code: Small ribosomal subunit protein uS9c (131 aa).

Belongs to the universal ribosomal protein uS9 family.

The protein localises to the plastid. It is found in the chloroplast. The protein is Small ribosomal subunit protein uS9c (rps9) of Emiliania huxleyi (Coccolithophore).